Consider the following 476-residue polypeptide: Aspartyl/glutamyl-tRNA(Asn/Gln) amidotransferase subunit B (476 aa).

This sequence belongs to the GatB/GatE family. GatB subfamily. In terms of assembly, heterotrimer of A, B and C subunits.

It catalyses the reaction L-glutamyl-tRNA(Gln) + L-glutamine + ATP + H2O = L-glutaminyl-tRNA(Gln) + L-glutamate + ADP + phosphate + H(+). It carries out the reaction L-aspartyl-tRNA(Asn) + L-glutamine + ATP + H2O = L-asparaginyl-tRNA(Asn) + L-glutamate + ADP + phosphate + 2 H(+). Its function is as follows. Allows the formation of correctly charged Asn-tRNA(Asn) or Gln-tRNA(Gln) through the transamidation of misacylated Asp-tRNA(Asn) or Glu-tRNA(Gln) in organisms which lack either or both of asparaginyl-tRNA or glutaminyl-tRNA synthetases. The reaction takes place in the presence of glutamine and ATP through an activated phospho-Asp-tRNA(Asn) or phospho-Glu-tRNA(Gln). The chain is Aspartyl/glutamyl-tRNA(Asn/Gln) amidotransferase subunit B from Latilactobacillus sakei subsp. sakei (strain 23K) (Lactobacillus sakei subsp. sakei).